Here is a 369-residue protein sequence, read N- to C-terminus: tRNA 2-selenouridine synthase (369 aa).

Positions 12 to 136 constitute a Rhodanese domain; it reads FLEDTPLMDV…LRNFLFETTR (125 aa). The active-site S-selanylcysteine intermediate is the Cys95.

The protein belongs to the SelU family. Monomer.

It carries out the reaction 5-methylaminomethyl-2-thiouridine(34) in tRNA + selenophosphate + (2E)-geranyl diphosphate + H2O + H(+) = 5-methylaminomethyl-2-selenouridine(34) in tRNA + (2E)-thiogeraniol + phosphate + diphosphate. The enzyme catalyses 5-methylaminomethyl-2-thiouridine(34) in tRNA + (2E)-geranyl diphosphate = 5-methylaminomethyl-S-(2E)-geranyl-thiouridine(34) in tRNA + diphosphate. The catalysed reaction is 5-methylaminomethyl-S-(2E)-geranyl-thiouridine(34) in tRNA + selenophosphate + H(+) = 5-methylaminomethyl-2-(Se-phospho)selenouridine(34) in tRNA + (2E)-thiogeraniol. It catalyses the reaction 5-methylaminomethyl-2-(Se-phospho)selenouridine(34) in tRNA + H2O = 5-methylaminomethyl-2-selenouridine(34) in tRNA + phosphate. Its function is as follows. Involved in the post-transcriptional modification of the uridine at the wobble position (U34) of tRNA(Lys), tRNA(Glu) and tRNA(Gln). Catalyzes the conversion of 2-thiouridine (S2U-RNA) to 2-selenouridine (Se2U-RNA). Acts in a two-step process involving geranylation of 2-thiouridine (S2U) to S-geranyl-2-thiouridine (geS2U) and subsequent selenation of the latter derivative to 2-selenouridine (Se2U) in the tRNA chain. The chain is tRNA 2-selenouridine synthase from Pseudomonas paraeruginosa (strain DSM 24068 / PA7) (Pseudomonas aeruginosa (strain PA7)).